Here is a 145-residue protein sequence, read N- to C-terminus: D-aminoacyl-tRNA deacylase (145 aa).

A Gly-cisPro motif, important for rejection of L-amino acids motif is present at residues 137–138 (GP).

This sequence belongs to the DTD family. As to quaternary structure, homodimer.

It is found in the cytoplasm. It catalyses the reaction glycyl-tRNA(Ala) + H2O = tRNA(Ala) + glycine + H(+). It carries out the reaction a D-aminoacyl-tRNA + H2O = a tRNA + a D-alpha-amino acid + H(+). Its function is as follows. An aminoacyl-tRNA editing enzyme that deacylates mischarged D-aminoacyl-tRNAs. Also deacylates mischarged glycyl-tRNA(Ala), protecting cells against glycine mischarging by AlaRS. Acts via tRNA-based rather than protein-based catalysis; rejects L-amino acids rather than detecting D-amino acids in the active site. By recycling D-aminoacyl-tRNA to D-amino acids and free tRNA molecules, this enzyme counteracts the toxicity associated with the formation of D-aminoacyl-tRNA entities in vivo and helps enforce protein L-homochirality. This chain is D-aminoacyl-tRNA deacylase, found in Cereibacter sphaeroides (strain KD131 / KCTC 12085) (Rhodobacter sphaeroides).